Reading from the N-terminus, the 205-residue chain is Ribonuclease HII (205 aa).

Positions 14–205 constitute an RNase H type-2 domain; that stretch reads SLISGIDEAG…SFRLKQLGEK (192 aa). A divalent metal cation-binding residues include Asp20, Glu21, and Asp117.

This sequence belongs to the RNase HII family. The cofactor is Mn(2+). Mg(2+) is required as a cofactor.

Its subcellular location is the cytoplasm. The catalysed reaction is Endonucleolytic cleavage to 5'-phosphomonoester.. In terms of biological role, endonuclease that specifically degrades the RNA of RNA-DNA hybrids. This is Ribonuclease HII from Chlorobium phaeobacteroides (strain DSM 266 / SMG 266 / 2430).